The following is a 546-amino-acid chain: Chaperonin GroEL (546 aa).

ATP-binding positions include 30–33 (TLGP), lysine 51, 87–91 (DGTTT), glycine 415, and aspartate 495.

Belongs to the chaperonin (HSP60) family. As to quaternary structure, forms a cylinder of 14 subunits composed of two heptameric rings stacked back-to-back. Interacts with the co-chaperonin GroES.

The protein localises to the cytoplasm. It carries out the reaction ATP + H2O + a folded polypeptide = ADP + phosphate + an unfolded polypeptide.. In terms of biological role, together with its co-chaperonin GroES, plays an essential role in assisting protein folding. The GroEL-GroES system forms a nano-cage that allows encapsulation of the non-native substrate proteins and provides a physical environment optimized to promote and accelerate protein folding. The chain is Chaperonin GroEL from Brucella melitensis biotype 2 (strain ATCC 23457).